Here is a 943-residue protein sequence, read N- to C-terminus: Isoleucine--tRNA ligase (943 aa).

Residues Pro-58–His-68 carry the 'HIGH' region motif. Residue Glu-567 coordinates L-isoleucyl-5'-AMP. The 'KMSKS' region signature appears at Lys-608–Ser-612. Lys-611 contacts ATP. Residues Cys-906, Cys-909, Cys-926, and Cys-929 each contribute to the Zn(2+) site.

The protein belongs to the class-I aminoacyl-tRNA synthetase family. IleS type 1 subfamily. In terms of assembly, monomer. It depends on Zn(2+) as a cofactor.

The protein resides in the cytoplasm. It carries out the reaction tRNA(Ile) + L-isoleucine + ATP = L-isoleucyl-tRNA(Ile) + AMP + diphosphate. Functionally, catalyzes the attachment of isoleucine to tRNA(Ile). As IleRS can inadvertently accommodate and process structurally similar amino acids such as valine, to avoid such errors it has two additional distinct tRNA(Ile)-dependent editing activities. One activity is designated as 'pretransfer' editing and involves the hydrolysis of activated Val-AMP. The other activity is designated 'posttransfer' editing and involves deacylation of mischarged Val-tRNA(Ile). This is Isoleucine--tRNA ligase from Pseudomonas fluorescens (strain SBW25).